The primary structure comprises 166 residues: Sec-independent protein translocase protein TatB (166 aa).

Residues 1–21 (MIDIAFSKLAIIGVAALVFIG) traverse the membrane as a helical segment. The disordered stretch occupies residues 85–146 (DSSLHSAWDE…SGQKSRVISG (62 aa)).

It belongs to the TatB family. In terms of assembly, the Tat system comprises two distinct complexes: a TatABC complex, containing multiple copies of TatA, TatB and TatC subunits, and a separate TatA complex, containing only TatA subunits. Substrates initially bind to the TatABC complex, which probably triggers association of the separate TatA complex to form the active translocon.

It localises to the cell inner membrane. In terms of biological role, part of the twin-arginine translocation (Tat) system that transports large folded proteins containing a characteristic twin-arginine motif in their signal peptide across membranes. Together with TatC, TatB is part of a receptor directly interacting with Tat signal peptides. TatB may form an oligomeric binding site that transiently accommodates folded Tat precursor proteins before their translocation. This Herminiimonas arsenicoxydans protein is Sec-independent protein translocase protein TatB.